Here is a 38-residue protein sequence, read N- to C-terminus: Antimicrobial peptide 1 (38 aa).

Post-translationally, disulfide bonds. In terms of tissue distribution, expressed in flowers but not in leaves, seeds or roots (at protein level).

Its function is as follows. Antimicrobial peptide. Active against fungal species B.cinerea (IC(50)=5.8 uM) and A.niger (IC(50)=5.6 uM) but not against F.oxysporum, F.graminearum, B.sorokinina and P.debaryanum at concentrations below 10 uM. Active against bacterial species P.syringae, B.subtilis and X.campestris. This is Antimicrobial peptide 1 from Taraxacum officinale (Common dandelion).